A 60-amino-acid polypeptide reads, in one-letter code: Large ribosomal subunit protein bL32 (60 aa).

The protein belongs to the bacterial ribosomal protein bL32 family.

In Borrelia hermsii (strain HS1 / DAH), this protein is Large ribosomal subunit protein bL32.